A 360-amino-acid polypeptide reads, in one-letter code: MVQAHGGRSRAQPLTLSLGAAMTQPPPEKTPAKKHVRLQERRGSNVALMLDVRSLGAVEPICSVNTPREVTLHFLRTAGHPLTRWALQRQPPSPKQLEEEFLKIPSNFVSPEDLDIPGHASKDRYKTILPNPQSRVCLGRAQSQEDGDYINANYIRGYDGKEKVYIATQGPMPNTVSDFWEMVWQEEVSLIVMLTQLREGKEKCVHYWPTEEETYGPFQIRIQDMKECPEYTVRQLTIQYQEERRSVKHILFSAWPDHQTPESAGPLLRLVAEVEESPETAAHPGPIVVHCSAGIGRTGCFIATRIGCQQLKARGEVDILGIVCQLRLDRGGMIQTAEQYQFLHHTLALYAGQLPEEPSP.

The interval 1-37 is disordered; that stretch reads MVQAHGGRSRAQPLTLSLGAAMTQPPPEKTPAKKHVR. An interaction with MAP kinases region spans residues 38 to 51; it reads LQERRGSNVALMLD. At S44 the chain carries Phosphoserine. T66 carries the post-translational modification Phosphothreonine. Phosphoserine is present on residues S93, S110, and S143. Residues 97 to 350 form the Tyrosine-protein phosphatase domain; the sequence is LEEEFLKIPS…QFLHHTLALY (254 aa). Residues D257, 291-297, and Q335 contribute to the substrate site; that span reads CSAGIGR. C291 (phosphocysteine intermediate) is an active-site residue. C291 carries the cysteine sulfenic acid (-SOH) modification.

Belongs to the protein-tyrosine phosphatase family. Non-receptor class subfamily. Monomer. Interacts with MAPK1, MAPK3 and several other MAP kinases. Post-translationally, phosphorylated on serine residues in resting T-cells. Phosphorylation increases upon exposure to stimuli that increase intracellular cAMP levels. Phosphorylation leads to dissociation of bound MAP kinases. In terms of processing, oxidized at active site cysteine. Treatment with pervanadate (vanadate and H(2)O(2)) or with antigen enhanced oxidation of active site cysteine. In terms of tissue distribution, expressed exclusively in thymus and spleen.

Its subcellular location is the cytoplasm. The protein localises to the cytoskeleton. The enzyme catalyses O-phospho-L-tyrosyl-[protein] + H2O = L-tyrosyl-[protein] + phosphate. With respect to regulation, inhibited in cells after FCER1A triggering. Protein phosphatase that acts preferentially on tyrosine-phosphorylated MAPK1. Plays a role in the regulation of T and B-lymphocyte development and signal transduction. This is Tyrosine-protein phosphatase non-receptor type 7 (PTPN7) from Homo sapiens (Human).